The chain runs to 519 residues: FAD-dependent monooxygenase macF (519 aa).

Residues 1–20 form the signal peptide; sequence MTKMTSIIGILMGVLTTATA. The FAD-binding PCMH-type domain occupies 88 to 262; sequence CRLNASCIVT…TEYDLTTNTG (175 aa). His-125 carries the pros-8alpha-FAD histidine modification.

This sequence belongs to the oxygen-dependent FAD-linked oxidoreductase family.

Its pathway is secondary metabolite biosynthesis; terpenoid biosynthesis. In terms of biological role, FAD-dependent monooxygenase; part of the gene cluster that mediates the biosynthesis of macrophorins, isoprenoid epoxycyclohexenones containing cyclized drimane moieties. The first step of the pathway is the synthesis of 6-methylsalicylic acid (6-MSA) by the polyketide synthase macA. 6-MSA is then converted to m-cresol by the decarboxylase macB. The cytochrome P450 monooxygenase macC then catalyzes the oxidation of m-cresol to toluquinol. Epoxidation of toluquinol is then performed by the short chain dehydrogenase macD, with the help of macE, and a further prenylation by macG leads to 7-deacetoxyyanuthone A. The next step is the hydroxylation of C-22 of 7-deacetoxyyanuthone A by the cytochrome P450 monooxygenase macH to yield 22-deacetylyanuthone A. O-Mevalon transferase macI then attaches mevalon to the hydroxyl group of 22-deacetylyanuthone A to produce yanuthone E. The terpene cyclase macJ catalyzes the cyclization of 22-deacetylyanuthone A to macrophorin A. MacJ is also able to catalyze cyclization of yanuthone E and 7-deacetoxyyanuthone A to their corresponding macrophorins. The macJ products can be further modified by macH and macJ, as well as by the FAD-dependent monooxygenase macF, to produce additional macrophorins, including 4'-oxomacrophorin A, 4'-oxomacrophorin D and 4'-oxomacrophorin E. In Penicillium terrestre, this protein is FAD-dependent monooxygenase macF.